A 1253-amino-acid polypeptide reads, in one-letter code: Latent-transforming growth factor beta-binding protein 3 (1253 aa).

The first 38 residues, 1–38 (MPGPRGAAHGLAPAMRQAGALGLLALLLLALLGPGGGA), serve as a signal peptide directing secretion. Asparagine 86 carries an N-linked (GlcNAc...) asparagine glycan. Residues 106–138 (RVVVCPLPCMNGGQCSSRNQCLCPPDFTGRFCQ) enclose the EGF-like 1 domain. Intrachain disulfides connect cysteine 110–cysteine 120, cysteine 114–cysteine 126, and cysteine 128–cysteine 137. Residues 244 to 270 (GPNAEGPASSQHLLPHPKPQHPRPPTQ) are disordered. The TB 1 domain maps to 274–328 (GRCFQDTLPKQPCGSNPLPGLTKQEDCCGSIGTAWGQSKCHKCPQLQYTGVQKPG). Cystine bridges form between cysteine 276-cysteine 300, cysteine 286-cysteine 313, and cysteine 301-cysteine 316. Asparagine 346 is a glycosylation site (N-linked (GlcNAc...) asparagine). The 41-residue stretch at 352-392 (DINECAMPGMCRHGDCLNNPGSYRCVCPPGHSLGPSRTQCI) folds into the EGF-like 2; calcium-binding domain. Intrachain disulfides connect cysteine 356-cysteine 367, cysteine 362-cysteine 376, cysteine 378-cysteine 391, cysteine 402-cysteine 425, cysteine 412-cysteine 437, cysteine 426-cysteine 440, and cysteine 427-cysteine 452. The TB 2 domain occupies 400-452 (SLCFRLVSTEHQCQHPLTTRLTRQLCCCSVGKAWGARCQRCPADGTAAFKEIC). Positions 475-555 (FSLFLHPDGP…PTFHRFLPDL (81 aa)) are disordered. An EGF-like 3 domain is found at 571-612 (ETDECRLNQNICGHGQCVPGPSDYSCHCNAGYRSHPQHRYCV). Intrachain disulfides connect cysteine 575–cysteine 587, cysteine 582–cysteine 596, cysteine 598–cysteine 611, cysteine 617–cysteine 629, cysteine 622–cysteine 638, cysteine 661–cysteine 673, cysteine 667–cysteine 682, cysteine 684–cysteine 698, cysteine 745–cysteine 756, cysteine 751–cysteine 765, cysteine 767–cysteine 780, cysteine 786–cysteine 797, cysteine 792–cysteine 806, cysteine 808–cysteine 821, cysteine 827–cysteine 838, cysteine 833–cysteine 847, cysteine 849–cysteine 861, cysteine 867–cysteine 880, cysteine 874–cysteine 889, cysteine 891–cysteine 904, cysteine 916–cysteine 939, cysteine 926–cysteine 951, cysteine 940–cysteine 956, cysteine 941–cysteine 968, cysteine 994–cysteine 1007, cysteine 1002–cysteine 1016, cysteine 1018–cysteine 1031, cysteine 1037–cysteine 1048, cysteine 1043–cysteine 1057, cysteine 1059–cysteine 1072, cysteine 1113–cysteine 1127, and cysteine 1114–cysteine 1136. In terms of domain architecture, EGF-like 4; calcium-binding spans 613 to 656 (DVNECEAEPCGPGKGICMNTGGSYNCHCNRGYRLHVGAGGRSCV). The EGF-like 5; calcium-binding domain maps to 657 to 699 (DLNECTKPHLCGDGGFCINFPGHYKCNCYPGYRLKASRPPICE). An EGF-like 6; calcium-binding domain is found at 741–781 (DVNECSEGTPCSPGWCENLPGSYRCTCAQGYEPAQDGLSCI). One can recognise an EGF-like 7; calcium-binding domain in the interval 782–822 (DVDECEAGKVCQDGICTNTPGSFQCQCLSGYHLSRDRSRCE). One can recognise an EGF-like 8; calcium-binding domain in the interval 823–861 (DIDECDFPAACIGGDCINTNGSYRCLCPQGHRLVGGRKC). N-linked (GlcNAc...) asparagine glycosylation is present at asparagine 842. The 43-residue stretch at 863–905 (DIDECSQDPGLCLPHGACENLQGSYVCVCDEGFTLTQDQHGCE) folds into the EGF-like 9; calcium-binding domain. The 55-residue stretch at 914–968 (KECYLNFDDTVFCDSVLATNVTQQECCCSLGAGWGDHCEIYPCPVYSSAEFHSLC) folds into the TB 3 domain. N-linked (GlcNAc...) asparagine glycosylation occurs at asparagine 933. Positions 990–1032 (DIDECILFGAEICKEGKCVNTQPGYECYCKQGFYYDGNLLECV) constitute an EGF-like 10; calcium-binding domain. An EGF-like 11; calcium-binding domain is found at 1033-1072 (DVDECLDESNCRNGVCENTRGGYRCACTPPAEYSPAQRQC). The TB 4 domain maps to 1086–1136 (EVCWGQRGEDGMCMGPLAGPALTFDDCCCRQGRGWGTQCRPCPPRGTGSQC). The segment covering 1138–1148 (TSQSESNSFWD) has biased composition (polar residues). The tract at residues 1138–1169 (TSQSESNSFWDTSPLLLGKSPRDEDSSEEDSD) is disordered. The EGF-like 12; calcium-binding domain maps to 1204–1231 (DIDECRELNQRGLLCKSERCVNTSGSFR). Intrachain disulfides connect cysteine 1208–cysteine 1223 and cysteine 1218–cysteine 1232. Asparagine 1225 is a glycosylation site (N-linked (GlcNAc...) asparagine).

The protein belongs to the LTBP family. In terms of assembly, forms part of the large latent transforming growth factor beta (TGFB1) precursor complex; removal is essential for activation of complex. Interacts with EFEMP2. Post-translationally, contains hydroxylated asparagine residues. Two intrachain disulfide bonds from the TB3 domain are rearranged upon TGFB1 binding, and form interchain bonds with TGFB1 propeptide, anchoring it to the extracellular matrix.

The protein resides in the secreted. It localises to the extracellular space. The protein localises to the extracellular matrix. In terms of biological role, key regulator of transforming growth factor beta (TGFB1, TGFB2 and TGFB3) that controls TGF-beta activation by maintaining it in a latent state during storage in extracellular space. Associates specifically via disulfide bonds with the Latency-associated peptide (LAP), which is the regulatory chain of TGF-beta, and regulates integrin-dependent activation of TGF-beta. The sequence is that of Latent-transforming growth factor beta-binding protein 3 (Ltbp3) from Mus musculus (Mouse).